A 1347-amino-acid chain; its full sequence is Spermatogenesis-associated protein 31A5 (1347 aa).

Residues 23–43 traverse the membrane as a helical segment; the sequence is PWVLDIFLTLVFALGFFFLLL. Disordered stretches follow at residues 55–87, 106–233, 373–397, 628–657, 900–955, 1084–1161, and 1313–1335; these read PSPSPGKRKCPVGRRRRPRGRMKNHSLRAGREC, GPHL…RDST, EQDTTNPKPFWNMGENSKQLPGPQK, DESPGTSQAKGKPSPWQSSMSTGEGSKEAQ, RGIP…REAV, VHEE…PSVS, and KAVSPVSPPQHWPKTSGASSHHH. The segment covering 60 to 82 has biased composition (basic residues); it reads GKRKCPVGRRRRPRGRMKNHSLR. Polar residues predominate over residues 165–178; sequence LASTPSPGPMTTSV. Over residues 198 to 211 the composition is skewed to pro residues; it reads PEPPALFPHPPHTP. Composition is skewed to polar residues over residues 631–651 and 927–948; these read PGTSQAKGKPSPWQSSMSTGE and LTYSLTGSIQQSRSLGAQSSKA. 2 stretches are compositionally biased toward basic and acidic residues: residues 1108–1127 and 1137–1146; these read HKSEKSRKPNLEKHEERLEG and RKTEDTHQDE.

This sequence belongs to the SPATA31 family.

The protein localises to the membrane. In terms of biological role, may play a role in spermatogenesis. The protein is Spermatogenesis-associated protein 31A5 (SPATA31A5) of Homo sapiens (Human).